Reading from the N-terminus, the 326-residue chain is Phospho-N-acetylmuramoyl-pentapeptide-transferase (326 aa).

Helical transmembrane passes span 3 to 23 (ISIS…PAFI), 51 to 71 (TMGG…LALF), 79 to 99 (VGMI…DDFL), 115 to 135 (LALQ…GGDM), 138 to 158 (VFSY…FWLV), 169 to 189 (GIDG…GVIA), 195 to 215 (MDIL…FVFN), 221 to 243 (VFMG…MALH), and 306 to 326 (FFFW…LYLM).

Belongs to the glycosyltransferase 4 family. MraY subfamily. Requires Mg(2+) as cofactor.

It is found in the cell membrane. It carries out the reaction UDP-N-acetyl-alpha-D-muramoyl-L-alanyl-gamma-D-glutamyl-L-lysyl-D-alanyl-D-alanine + di-trans,octa-cis-undecaprenyl phosphate = Mur2Ac(oyl-L-Ala-gamma-D-Glu-L-Lys-D-Ala-D-Ala)-di-trans,octa-cis-undecaprenyl diphosphate + UMP. The protein operates within cell wall biogenesis; peptidoglycan biosynthesis. Catalyzes the initial step of the lipid cycle reactions in the biosynthesis of the cell wall peptidoglycan: transfers peptidoglycan precursor phospho-MurNAc-pentapeptide from UDP-MurNAc-pentapeptide onto the lipid carrier undecaprenyl phosphate, yielding undecaprenyl-pyrophosphoryl-MurNAc-pentapeptide, known as lipid I. This chain is Phospho-N-acetylmuramoyl-pentapeptide-transferase, found in Streptococcus pneumoniae (strain ATCC 700669 / Spain 23F-1).